The following is a 73-amino-acid chain: Large ribosomal subunit protein uL29 (73 aa).

A disordered region spans residues 1–20; that stretch reads MYKAKDLRDQSLEELEATHD.

Belongs to the universal ribosomal protein uL29 family.

The polypeptide is Large ribosomal subunit protein uL29 (Protochlamydia amoebophila (strain UWE25)).